We begin with the raw amino-acid sequence, 316 residues long: Cytochrome c biogenesis protein CcsA (316 aa).

The next 8 membrane-spanning stretches (helical) occupy residues 9 to 29 (IFVN…LINL), 39 to 61 (FSKN…RYLQ), 70 to 90 (LYES…ILEV), 94 to 114 (IGLS…FATL), 143 to 163 (LISY…LSLF), 224 to 244 (TISL…VWAN), 257 to 271 (ETWA…AIYL), and 289 to 309 (SMGF…GVGL).

It belongs to the CcmF/CycK/Ccl1/NrfE/CcsA family. As to quaternary structure, may interact with Ccs1.

Its subcellular location is the plastid. The protein resides in the chloroplast thylakoid membrane. Its function is as follows. Required during biogenesis of c-type cytochromes (cytochrome c6 and cytochrome f) at the step of heme attachment. The sequence is that of Cytochrome c biogenesis protein CcsA from Adiantum capillus-veneris (Maidenhair fern).